A 288-amino-acid polypeptide reads, in one-letter code: Phosphatidylserine decarboxylase proenzyme (288 aa).

Catalysis depends on charge relay system; for autoendoproteolytic cleavage activity residues Asp-90, His-147, and Ser-254. The active-site Schiff-base intermediate with substrate; via pyruvic acid; for decarboxylase activity is the Ser-254. The residue at position 254 (Ser-254) is a Pyruvic acid (Ser); by autocatalysis.

The protein belongs to the phosphatidylserine decarboxylase family. PSD-B subfamily. Prokaryotic type I sub-subfamily. In terms of assembly, heterodimer of a large membrane-associated beta subunit and a small pyruvoyl-containing alpha subunit. It depends on pyruvate as a cofactor. In terms of processing, is synthesized initially as an inactive proenzyme. Formation of the active enzyme involves a self-maturation process in which the active site pyruvoyl group is generated from an internal serine residue via an autocatalytic post-translational modification. Two non-identical subunits are generated from the proenzyme in this reaction, and the pyruvate is formed at the N-terminus of the alpha chain, which is derived from the carboxyl end of the proenzyme. The autoendoproteolytic cleavage occurs by a canonical serine protease mechanism, in which the side chain hydroxyl group of the serine supplies its oxygen atom to form the C-terminus of the beta chain, while the remainder of the serine residue undergoes an oxidative deamination to produce ammonia and the pyruvoyl prosthetic group on the alpha chain. During this reaction, the Ser that is part of the protease active site of the proenzyme becomes the pyruvoyl prosthetic group, which constitutes an essential element of the active site of the mature decarboxylase.

Its subcellular location is the cell membrane. It catalyses the reaction a 1,2-diacyl-sn-glycero-3-phospho-L-serine + H(+) = a 1,2-diacyl-sn-glycero-3-phosphoethanolamine + CO2. The protein operates within phospholipid metabolism; phosphatidylethanolamine biosynthesis; phosphatidylethanolamine from CDP-diacylglycerol: step 2/2. Its function is as follows. Catalyzes the formation of phosphatidylethanolamine (PtdEtn) from phosphatidylserine (PtdSer). The polypeptide is Phosphatidylserine decarboxylase proenzyme (Hamiltonella defensa subsp. Acyrthosiphon pisum (strain 5AT)).